The sequence spans 128 residues: Putative pre-16S rRNA nuclease (128 aa).

Belongs to the YqgF nuclease family.

The protein localises to the cytoplasm. Could be a nuclease involved in processing of the 5'-end of pre-16S rRNA. The sequence is that of Putative pre-16S rRNA nuclease from Sulfurovum sp. (strain NBC37-1).